A 253-amino-acid polypeptide reads, in one-letter code: Isoprenyl transferase (253 aa).

D30 is a catalytic residue. D30 serves as a coordination point for Mg(2+). Substrate-binding positions include 31 to 34 (GNRR), W35, H51, and 79 to 81 (STE). The Proton acceptor role is filled by N82. Substrate is bound by residues F83, R85, R202, and 208 to 210 (RVS). Position 221 (E221) interacts with Mg(2+).

Belongs to the UPP synthase family. In terms of assembly, homodimer. Mg(2+) is required as a cofactor.

Functionally, catalyzes the condensation of isopentenyl diphosphate (IPP) with allylic pyrophosphates generating different type of terpenoids. The sequence is that of Isoprenyl transferase from Chlamydia trachomatis serovar D (strain ATCC VR-885 / DSM 19411 / UW-3/Cx).